The chain runs to 242 residues: MPYKRKLTSYFPQSKRFRGAKSGMAVVKTSASRRLYKKGKRKPDRIKTYTYAFSSICTDKGTIVYMNSWSLGLGPQQRSSDIEILKSMYIRLTVALSENAASQVKTYVVKWALIVDQVPGETLVGVADVYKTCPSPYPYVQCAYIADDNHSRFQVLRSGFLSLSGNGLAVGSSTRTGCPAMKNMASINKFCKNLNVRCVYDADSATGDIASIKRGAVYLVIWPDVEIRYGFSCTMYHRNGNA.

Residues 1–42 (MPYKRKLTSYFPQSKRFRGAKSGMAVVKTSASRRLYKKGKRK) carry the Bipartite nuclear localization signal motif.

Belongs to the geminiviridae capsid protein family. In terms of assembly, homomultimer. Binds to single-stranded and double-stranded viral DNA. Interacts (via nuclear localization signal) with host importin alpha-1a.

Its subcellular location is the virion. The protein resides in the host nucleus. In terms of biological role, encapsidates the viral genome into characteristic twinned ('geminate') particles. Binds the genomic viral ssDNA and shuttles it into and out of the cell nucleus. Plays a role in protection of the genome from degradation, virus acquisition and transmission by insect vectors, infectivity, and systemic movement. The CP of monopartite geminiviruses is absolutely essential for virus movement. This Solanum lycopersicum (Tomato) protein is Capsid protein.